A 562-amino-acid polypeptide reads, in one-letter code: Arginine--tRNA ligase (562 aa).

A 'HIGH' region motif is present at residues 122–132; sequence PNIAKDMHVGH.

This sequence belongs to the class-I aminoacyl-tRNA synthetase family. In terms of assembly, monomer.

The protein resides in the cytoplasm. The catalysed reaction is tRNA(Arg) + L-arginine + ATP = L-arginyl-tRNA(Arg) + AMP + diphosphate. This chain is Arginine--tRNA ligase, found in Chlamydia abortus (strain DSM 27085 / S26/3) (Chlamydophila abortus).